The sequence spans 890 residues: DNA mismatch repair protein MutS (890 aa).

ATP is bound at residue 646–653 (GPNMAGKS).

The protein belongs to the DNA mismatch repair MutS family.

This protein is involved in the repair of mismatches in DNA. It is possible that it carries out the mismatch recognition step. This protein has a weak ATPase activity. The protein is DNA mismatch repair protein MutS of Hyphomonas neptunium (strain ATCC 15444).